The primary structure comprises 264 residues: uncharacterized protein (264 aa).

This is an uncharacterized protein from Escherichia coli (strain K12).